A 102-amino-acid chain; its full sequence is uncharacterized protein (102 aa).

The N-terminal stretch at 1 to 22 (MKFKYGATLFSGFLGLSAILAA) is a signal peptide. The N-palmitoyl cysteine moiety is linked to residue Cys-23. Cys-23 is lipidated: S-diacylglycerol cysteine.

The protein belongs to the MG185/MG260 family.

It localises to the cell membrane. This is an uncharacterized protein from Mycoplasma pneumoniae (strain ATCC 29342 / M129 / Subtype 1) (Mycoplasmoides pneumoniae).